The sequence spans 663 residues: Methionine--tRNA ligase (663 aa).

The short motif at 13-23 (PYTNGPCHLGH) is the 'HIGH' region element. Residues C144, C147, C156, and C160 each coordinate Zn(2+). The short motif at 326 to 330 (KFSKS) is the 'KMSKS' region element. Position 329 (K329) interacts with ATP. The tRNA-binding domain occupies 565–663 (EFGKMKLIVG…QAVEPGTPIR (99 aa)).

The protein belongs to the class-I aminoacyl-tRNA synthetase family. MetG type 1 subfamily. As to quaternary structure, homodimer. Zn(2+) is required as a cofactor.

Its subcellular location is the cytoplasm. It carries out the reaction tRNA(Met) + L-methionine + ATP = L-methionyl-tRNA(Met) + AMP + diphosphate. Functionally, is required not only for elongation of protein synthesis but also for the initiation of all mRNA translation through initiator tRNA(fMet) aminoacylation. The polypeptide is Methionine--tRNA ligase (Methanosphaerula palustris (strain ATCC BAA-1556 / DSM 19958 / E1-9c)).